Consider the following 357-residue polypeptide: Nicotinate-nucleotide--dimethylbenzimidazole phosphoribosyltransferase (357 aa).

Glu323 acts as the Proton acceptor in catalysis.

This sequence belongs to the CobT family.

It carries out the reaction 5,6-dimethylbenzimidazole + nicotinate beta-D-ribonucleotide = alpha-ribazole 5'-phosphate + nicotinate + H(+). It functions in the pathway nucleoside biosynthesis; alpha-ribazole biosynthesis; alpha-ribazole from 5,6-dimethylbenzimidazole: step 1/2. Functionally, catalyzes the synthesis of alpha-ribazole-5'-phosphate from nicotinate mononucleotide (NAMN) and 5,6-dimethylbenzimidazole (DMB). This Nitratidesulfovibrio vulgaris (strain DP4) (Desulfovibrio vulgaris) protein is Nicotinate-nucleotide--dimethylbenzimidazole phosphoribosyltransferase.